The following is a 257-amino-acid chain: Imidazole glycerol phosphate synthase subunit HisF (257 aa).

Catalysis depends on residues Asp-11 and Asp-130.

Belongs to the HisA/HisF family. Heterodimer of HisH and HisF.

It localises to the cytoplasm. The catalysed reaction is 5-[(5-phospho-1-deoxy-D-ribulos-1-ylimino)methylamino]-1-(5-phospho-beta-D-ribosyl)imidazole-4-carboxamide + L-glutamine = D-erythro-1-(imidazol-4-yl)glycerol 3-phosphate + 5-amino-1-(5-phospho-beta-D-ribosyl)imidazole-4-carboxamide + L-glutamate + H(+). It functions in the pathway amino-acid biosynthesis; L-histidine biosynthesis; L-histidine from 5-phospho-alpha-D-ribose 1-diphosphate: step 5/9. Functionally, IGPS catalyzes the conversion of PRFAR and glutamine to IGP, AICAR and glutamate. The HisF subunit catalyzes the cyclization activity that produces IGP and AICAR from PRFAR using the ammonia provided by the HisH subunit. This is Imidazole glycerol phosphate synthase subunit HisF from Vibrio cholerae serotype O1 (strain ATCC 39541 / Classical Ogawa 395 / O395).